An 85-amino-acid polypeptide reads, in one-letter code: Anti-neuroexcitation peptide 3 (85 aa).

Positions 1-21 (MKLSLLLVISASMLIDGLVNA) are cleaved as a signal peptide. An LCN-type CS-alpha/beta domain is found at 22–82 (DGYIRGSNGC…TWKSESNTCG (61 aa)). Cystine bridges form between Cys31–Cys81, Cys35–Cys56, Cys42–Cys63, and Cys46–Cys65.

Belongs to the long (4 C-C) scorpion toxin superfamily. Sodium channel inhibitor family. Beta subfamily. Expressed by the venom gland.

It is found in the secreted. Functionally, binds to sodium channels (Nav) and inhibits them. Recombinant ANEP delays the convulsion seizure of model animals by 18% and shows anti-neuroexcitatory activity. The sequence is that of Anti-neuroexcitation peptide 3 from Olivierus martensii (Manchurian scorpion).